The sequence spans 333 residues: MKVYYDQDADLNLLKDKTVAIIGYGSQGHAHAQNLRDSGVKVVVGQRPGGANYELAKEHGFNPVSAAEAAAQADLIMLLLPDEVQAAVYENDIKPNLAKGKALLFAHGFNIHFGQIQPPKDVDVFLIAPKGPGHLVRRTYTEGGGVPCLVAIEQDATGKALQMALAYAKGVGGARSGVIETTFREETETDLFGEQAVLCGGVSALIKAGFETLVEAGYQPEMAYFECLHEMKLIVDLMYEGGLSRMRYSISNTAEYGDYVTGPRLVTDEVKKEMKAVLKDIQSGVFARNFILEARAKYPMFLTTRRNESEHQIEKVGKELRSMMPWLKKDKKD.

Residues 1-181 (MKVYYDQDAD…GGARSGVIET (181 aa)) form the KARI N-terminal Rossmann domain. NADP(+)-binding positions include 24–27 (YGSQ), Arg47, and 82–85 (DEVQ). The active site involves His107. Position 133 (Gly133) interacts with NADP(+). In terms of domain architecture, KARI C-terminal knotted spans 182–327 (TFREETETDL…KELRSMMPWL (146 aa)). Mg(2+) is bound by residues Asp190, Glu194, Glu226, and Glu230. Ser251 is a binding site for substrate.

Belongs to the ketol-acid reductoisomerase family. The cofactor is Mg(2+).

The catalysed reaction is (2R)-2,3-dihydroxy-3-methylbutanoate + NADP(+) = (2S)-2-acetolactate + NADPH + H(+). The enzyme catalyses (2R,3R)-2,3-dihydroxy-3-methylpentanoate + NADP(+) = (S)-2-ethyl-2-hydroxy-3-oxobutanoate + NADPH + H(+). The protein operates within amino-acid biosynthesis; L-isoleucine biosynthesis; L-isoleucine from 2-oxobutanoate: step 2/4. It participates in amino-acid biosynthesis; L-valine biosynthesis; L-valine from pyruvate: step 2/4. Functionally, involved in the biosynthesis of branched-chain amino acids (BCAA). Catalyzes an alkyl-migration followed by a ketol-acid reduction of (S)-2-acetolactate (S2AL) to yield (R)-2,3-dihydroxy-isovalerate. In the isomerase reaction, S2AL is rearranged via a Mg-dependent methyl migration to produce 3-hydroxy-3-methyl-2-ketobutyrate (HMKB). In the reductase reaction, this 2-ketoacid undergoes a metal-dependent reduction by NADPH to yield (R)-2,3-dihydroxy-isovalerate. The polypeptide is Ketol-acid reductoisomerase (NADP(+)) (Desulfovibrio desulfuricans (strain ATCC 27774 / DSM 6949 / MB)).